We begin with the raw amino-acid sequence, 245 residues long: Polyhedrin (245 aa).

The protein belongs to the polyhedrin family.

Major component of the virus occlusion bodies, which are large proteinaceous structures (polyhedra), that protect the virus from the outside environment for extended periods until they are ingested by insect larvae. The protein is Polyhedrin of Lepidoptera (butterflies and moths).